A 427-amino-acid chain; its full sequence is L-rhamnose isomerase (427 aa).

Residues H264, D296, and D298 each coordinate Mn(2+).

This sequence belongs to the rhamnose isomerase family. It depends on Mn(2+) as a cofactor.

It is found in the cytoplasm. The enzyme catalyses L-rhamnopyranose = L-rhamnulose. Its pathway is carbohydrate degradation; L-rhamnose degradation; glycerone phosphate from L-rhamnose: step 1/3. In terms of biological role, catalyzes the interconversion of L-rhamnose and L-rhamnulose. This is L-rhamnose isomerase from Rhodopirellula baltica (strain DSM 10527 / NCIMB 13988 / SH1).